The chain runs to 182 residues: UPF0397 protein SPH_0594 (182 aa).

A run of 5 helical transmembrane segments spans residues 10–30, 46–66, 73–93, 109–129, and 148–168; these read VVAV…NIPT, LLSI…GHAI, YGLW…VGLF, ILIF…VLAP, and IVAG…LLLA.

This sequence belongs to the UPF0397 family.

The protein resides in the cell membrane. This chain is UPF0397 protein SPH_0594, found in Streptococcus pneumoniae (strain Hungary19A-6).